The chain runs to 436 residues: Adenylosuccinate synthetase (436 aa).

GTP contacts are provided by residues G12–K18 and G40–T42. Residue D13 is the Proton acceptor of the active site. Mg(2+) contacts are provided by D13 and G40. Residues D13–K16, N38–H41, T128, R142, Q223, T238, and R302 contribute to the IMP site. The Proton donor role is filled by H41. T298 to R304 is a substrate binding site. GTP-binding positions include R304, K330–D332, and S412–G414.

It belongs to the adenylosuccinate synthetase family. Homodimer. Mg(2+) is required as a cofactor.

Its subcellular location is the cytoplasm. The catalysed reaction is IMP + L-aspartate + GTP = N(6)-(1,2-dicarboxyethyl)-AMP + GDP + phosphate + 2 H(+). The protein operates within purine metabolism; AMP biosynthesis via de novo pathway; AMP from IMP: step 1/2. Plays an important role in the de novo pathway of purine nucleotide biosynthesis. Catalyzes the first committed step in the biosynthesis of AMP from IMP. The protein is Adenylosuccinate synthetase of Prochlorococcus marinus (strain MIT 9301).